Here is a 377-residue protein sequence, read N- to C-terminus: tRNA pseudouridine synthase Pus10 (377 aa).

D206 (nucleophile) is an active-site residue. Substrate-binding residues include Y270 and Y339.

It belongs to the pseudouridine synthase Pus10 family.

The enzyme catalyses uridine(54) in tRNA = pseudouridine(54) in tRNA. The catalysed reaction is uridine(55) in tRNA = pseudouridine(55) in tRNA. Its function is as follows. Responsible for synthesis of pseudouridine from uracil-54 and uracil-55 in the psi GC loop of transfer RNAs. The chain is tRNA pseudouridine synthase Pus10 from Picrophilus torridus (strain ATCC 700027 / DSM 9790 / JCM 10055 / NBRC 100828 / KAW 2/3).